We begin with the raw amino-acid sequence, 274 residues long: Thiamine kinase (274 aa).

This sequence belongs to the thiamine kinase family.

It catalyses the reaction thiamine + ATP = thiamine phosphate + ADP + H(+). Its pathway is cofactor biosynthesis; thiamine diphosphate biosynthesis; thiamine phosphate from thiamine: step 1/1. Catalyzes the ATP-dependent phosphorylation of thiamine to thiamine phosphate. Is involved in thiamine salvage. The chain is Thiamine kinase from Escherichia coli O6:K15:H31 (strain 536 / UPEC).